Reading from the N-terminus, the 234-residue chain is uncharacterized protein (234 aa).

The tRNA-binding domain occupies 103–211 (LAKKVPFVVC…SHIKIGKSFL (109 aa)).

This is an uncharacterized protein from Mycoplasma pneumoniae (strain ATCC 29342 / M129 / Subtype 1) (Mycoplasmoides pneumoniae).